We begin with the raw amino-acid sequence, 125 residues long: Succinate dehydrogenase assembly factor 3, mitochondrial (125 aa).

The transit peptide at 1-30 (MPGRHVSRVRALYKRVLQLHRVLPPDLKSL) directs the protein to the mitochondrion.

It belongs to the complex I LYR family. SDHAF3 subfamily. Interacts with SDHB within an SDHA-SDHB subcomplex.

It is found in the mitochondrion matrix. Its function is as follows. Plays an essential role in the assembly of succinate dehydrogenase (SDH), an enzyme complex (also referred to as respiratory complex II) that is a component of both the tricarboxylic acid (TCA) cycle and the mitochondrial electron transport chain, and which couples the oxidation of succinate to fumarate with the reduction of ubiquinone (coenzyme Q) to ubiquinol. Promotes maturation of the iron-sulfur protein subunit SDHB of the SDH catalytic dimer, protecting it from the deleterious effects of oxidants. May act together with SDHAF1. The sequence is that of Succinate dehydrogenase assembly factor 3, mitochondrial from Homo sapiens (Human).